Consider the following 526-residue polypeptide: Glucose-6-phosphate 1-dehydrogenase (526 aa).

NADP(+) contacts are provided by residues 50–57 (GASGDLAK), Arg84, and Lys184. D-glucose 6-phosphate is bound by residues Lys184, 214–218 (HYLGK), Glu252, and Asp271. His276 (proton acceptor) is an active-site residue. Arg370 contributes to the NADP(+) binding site. D-glucose 6-phosphate-binding residues include Lys373 and Arg378. NADP(+)-binding residues include Lys379, Arg383, and Arg406. Residue Gln408 participates in D-glucose 6-phosphate binding. NADP(+) contacts are provided by residues 414-416 (YFK), 434-436 (DLT), Arg500, Tyr516, and Trp522.

Belongs to the glucose-6-phosphate dehydrogenase family.

Its subcellular location is the cytoplasm. It is found in the cytosol. The catalysed reaction is D-glucose 6-phosphate + NADP(+) = 6-phospho-D-glucono-1,5-lactone + NADPH + H(+). Its pathway is carbohydrate degradation; pentose phosphate pathway; D-ribulose 5-phosphate from D-glucose 6-phosphate (oxidative stage): step 1/3. Cytosolic glucose-6-phosphate dehydrogenase that catalyzes the first and rate-limiting step of the oxidative branch within the pentose phosphate pathway/shunt, an alternative route to glycolysis for the dissimilation of carbohydrates and a major source of reducing power and metabolic intermediates for fatty acid and nucleic acid biosynthetic processes. In Ceratitis capitata (Mediterranean fruit fly), this protein is Glucose-6-phosphate 1-dehydrogenase (ZW).